We begin with the raw amino-acid sequence, 106 residues long: MLMTTTPTLEGKPVQQYLGVVTGEAIIGANIFKDLFASIRNIVGGRAGAYERSLADAREVAMAEMAEQALKLGANAVIGIDIDYEVLGQDNGMLMVCVSGTAVITA.

Belongs to the UPF0145 family.

The chain is UPF0145 protein azo0572 from Azoarcus sp. (strain BH72).